The following is a 206-amino-acid chain: Small ribosomal subunit protein uS4 (206 aa).

Residues 15–46 form a disordered region; that stretch reads MGENIWGRPKSPVNKREYGPGQHGQRRKNKLS. An S4 RNA-binding domain is found at 94–157; sequence RRLDAIVYRA…RQLAIVLEAT (64 aa).

The protein belongs to the universal ribosomal protein uS4 family. In terms of assembly, part of the 30S ribosomal subunit. Contacts protein S5. The interaction surface between S4 and S5 is involved in control of translational fidelity.

Functionally, one of the primary rRNA binding proteins, it binds directly to 16S rRNA where it nucleates assembly of the body of the 30S subunit. Its function is as follows. With S5 and S12 plays an important role in translational accuracy. The chain is Small ribosomal subunit protein uS4 from Cereibacter sphaeroides (strain ATCC 17025 / ATH 2.4.3) (Rhodobacter sphaeroides).